Here is a 79-residue protein sequence, read N- to C-terminus: Probable [Fe-S]-dependent transcriptional repressor (79 aa).

Positions 54, 59, 62, and 68 each coordinate iron-sulfur cluster.

Belongs to the FeoC family.

Its function is as follows. May function as a transcriptional regulator that controls feoABC expression. The protein is Probable [Fe-S]-dependent transcriptional repressor of Photorhabdus laumondii subsp. laumondii (strain DSM 15139 / CIP 105565 / TT01) (Photorhabdus luminescens subsp. laumondii).